The sequence spans 593 residues: RGRDDDDEENPRDPREQYRQCQEYCRRQGQGQRQQQQCQIRCEERLEEDQRSQEERERRRGRDVDDQNPRDPEQRYEQCQQQCERQRRGQEQTLCRRRCEQRRQQEERERQRGRDRQDPQQQYHRCQRRCQIQEQSPERQRQCQQRCERQYKEQQGRERGPEASPRRESRGREEEQQRHNPYYFHSQSIRSRHESEEGEVKYLERFTERTELLRGIENYRVVILDANPNTSMLPHHKDAESVAVVTRGRATLTLVSQETRESFNLECGDVIRVPAGATVYVINQDSNERLEMVKLLQPVNNPGQFREYYAAGAKSPDQSYLRVFSNDILVAALNTPRDRLERFFDQQEQREGVIIRASQEKLRALSQHAMSAGQRPWGRRSSGGPISLKSESPSYSNQFGQFFEACPEEHRQLQEMDVLVNYAEIKRGAMMVPHYNSKATVVVYVVEGTGRYEMACPHVSSQSYEGQGRREQEEEESTGRFQKVTARLARGDIFVIPAGHPIAITASQNENLRLLGFDINGENNQRDFLAGQNNIINQLEREAKELSFNMPREEIEEIFESQMESYFVPTERQSRRGQGRDHPLASILDFAFF.

2 stretches are compositionally biased toward basic and acidic residues: residues 46 to 76 (LEED…EQRY) and 97 to 118 (RRCE…DRQD). A disordered region spans residues 46–123 (LEEDQRSQEE…RDRQDPQQQY (78 aa)). 3 igE-binding regions span residues 49 to 58 (DQRSQEERER), 76 to 85 (YEQCQQQCER), and 101 to 110 (QRRQQEERER). The segment at 140-149 (QRQCQQRCER) is igE-binding. Involved in cross-reactivity with peanut allergen Ara h 2; able to inhibit binding of IgE from a peanut-allergic patient to Ara h 2. Basic and acidic residues predominate over residues 150-178 (QYKEQQGRERGPEASPRRESRGREEEQQR). The segment at 150–184 (QYKEQQGRERGPEASPRRESRGREEEQQRHNPYYF) is disordered. T-cell epitope; recognized by the HLA-DRB1-restricted CD4(+) T-cells stretches follow at residues 175-193 (EQQR…RSRH) and 206-225 (FTER…VILD). Tyr182 contacts Cu cation. Cupin type-1 domains follow at residues 187–341 (QSIR…DRLE) and 386–556 (ISLK…EEIE). An N-linked (GlcNAc...) asparagine glycan is attached at Asn229. 6 T-cell epitope; recognized by the HLA-DRB1-restricted CD4(+) T-cells regions span residues 246–265 (TRGR…SFNL), 302–321 (PGQF…QSYL), 318–337 (QSYL…NTPR), 382–401 (SGGP…QFGQ), 414–433 (QEMD…MMVP), and 438–457 (KATV…MACP). Residues Cys456 and His458 each contribute to the Cu cation site. The segment at 463 to 470 (SYEGQGRR) is igE-binding. The tract at residues 478–497 (TGRFQKVTARLARGDIFVIP) is T-cell epitope; recognized by the HLA-DRB1-restricted CD4(+) T-cells. Residue His500 coordinates Cu cation. Positions 529 to 556 (LAGQNNIINQLEREAKELSFNMPREEIE) form a coiled coil. An igE-binding region spans residues 541-555 (REAKELSFNMPREEI). T-cell epitope; recognized by the HLA-DRB1-restricted CD4(+) T-cells stretches follow at residues 542-561 (EAKE…IFES) and 558-577 (IFES…SRRG).

The protein belongs to the 7S seed storage protein family. In terms of processing, proteolytically cleaved. As to expression, expressed in seed (at protein level).

Functionally, seed storage protein. In Juglans regia (English walnut), this protein is Vicilin Jug r 2.0101.